A 389-amino-acid polypeptide reads, in one-letter code: Formate-dependent phosphoribosylglycinamide formyltransferase (389 aa).

Residues Glu-12 to Leu-13 and Glu-72 contribute to the N(1)-(5-phospho-beta-D-ribosyl)glycinamide site. Residues Arg-104, Lys-145, Ser-150 to Gln-155, Glu-185 to Val-188, and Glu-193 each bind ATP. Residues Asp-109 to Leu-300 form the ATP-grasp domain. The Mg(2+) site is built by Glu-258 and Glu-270. N(1)-(5-phospho-beta-D-ribosyl)glycinamide is bound by residues Asp-277, Lys-348, and Arg-355–Arg-356.

The protein belongs to the PurK/PurT family. Homodimer.

It carries out the reaction N(1)-(5-phospho-beta-D-ribosyl)glycinamide + formate + ATP = N(2)-formyl-N(1)-(5-phospho-beta-D-ribosyl)glycinamide + ADP + phosphate + H(+). The protein operates within purine metabolism; IMP biosynthesis via de novo pathway; N(2)-formyl-N(1)-(5-phospho-D-ribosyl)glycinamide from N(1)-(5-phospho-D-ribosyl)glycinamide (formate route): step 1/1. Functionally, involved in the de novo purine biosynthesis. Catalyzes the transfer of formate to 5-phospho-ribosyl-glycinamide (GAR), producing 5-phospho-ribosyl-N-formylglycinamide (FGAR). Formate is provided by PurU via hydrolysis of 10-formyl-tetrahydrofolate. This chain is Formate-dependent phosphoribosylglycinamide formyltransferase, found in Chlorobium phaeobacteroides (strain DSM 266 / SMG 266 / 2430).